The sequence spans 834 residues: U-box domain-containing protein 33 (834 aa).

The tract at residues 232 to 308 is disordered; that stretch reads FSTPESEHQH…SPSSFPDGVD (77 aa). Polar residues-rich tracts occupy residues 243 to 273 and 284 to 293; these read SRVQSTDSVQQLVSNGSSTEQSGRVSDGSLN and SEVTGSATVM. Positions 334 to 462 form a coiled coil; it reads LRRQKAEKNA…SHAETSTLQL (129 aa). One can recognise a Protein kinase domain in the interval 481–744; sequence FDSTLKIGEG…EVWRVLEPMR (264 aa). Residues 487–495 and lysine 508 contribute to the ATP site; that span reads IGEGGYGSI. The active-site Proton acceptor is aspartate 603. One can recognise a U-box domain in the interval 762–834; that stretch reads IAPPYFICPI…AIQEWLQHHL (73 aa).

This sequence belongs to the protein kinase superfamily. Ser/Thr protein kinase family.

The enzyme catalyses L-seryl-[protein] + ATP = O-phospho-L-seryl-[protein] + ADP + H(+). It carries out the reaction L-threonyl-[protein] + ATP = O-phospho-L-threonyl-[protein] + ADP + H(+). It catalyses the reaction S-ubiquitinyl-[E2 ubiquitin-conjugating enzyme]-L-cysteine + [acceptor protein]-L-lysine = [E2 ubiquitin-conjugating enzyme]-L-cysteine + N(6)-ubiquitinyl-[acceptor protein]-L-lysine.. It functions in the pathway protein modification; protein ubiquitination. Functionally, functions as an E3 ubiquitin ligase. The polypeptide is U-box domain-containing protein 33 (PUB33) (Arabidopsis thaliana (Mouse-ear cress)).